The primary structure comprises 134 residues: Small ribosomal subunit protein uS9c (134 aa).

Residues 105–134 are disordered; the sequence is QGYLTRNPLRKERKKYGLKKARKAPQFSKR. Residues 115-134 are compositionally biased toward basic residues; it reads KERKKYGLKKARKAPQFSKR.

It belongs to the universal ribosomal protein uS9 family.

Its subcellular location is the plastid. It is found in the chloroplast. This chain is Small ribosomal subunit protein uS9c (rps9), found in Nephroselmis olivacea (Green alga).